The sequence spans 231 residues: uncharacterized protein (231 aa).

Helical transmembrane passes span 39 to 59 (FCIS…YGPF), 70 to 90 (ALSL…VPVI), 156 to 176 (AIIS…GGSI), and 189 to 206 (IVAI…NMFF).

Belongs to the FliR/MopE/SpaR family.

The protein localises to the cell membrane. This is an uncharacterized protein from Escherichia coli (strain K12).